A 168-amino-acid chain; its full sequence is Ribosome maturation factor RimP (168 aa).

This sequence belongs to the RimP family.

The protein resides in the cytoplasm. Functionally, required for maturation of 30S ribosomal subunits. This is Ribosome maturation factor RimP from Bordetella parapertussis (strain 12822 / ATCC BAA-587 / NCTC 13253).